Consider the following 265-residue polypeptide: ClpXP adapter protein SpxH (265 aa).

Belongs to the SpxH family. In terms of assembly, interacts with Spx.

Its subcellular location is the cytoplasm. Its function is as follows. Adapter protein required for efficient degradation of Spx by ClpXP under non-stress conditions. Interaction with Spx stabilizes Spx and exposes the C-terminus of Spx for recognition and proteolysis by ClpXP. The protein is ClpXP adapter protein SpxH of Staphylococcus haemolyticus (strain JCSC1435).